The primary structure comprises 404 residues: Chorismate synthase (404 aa).

Residues R43 and R49 each coordinate NADP(+). FMN-binding positions include 138–140, 259–260, G303, 318–322, and R344; these read RAS, QA, and KPIST.

It belongs to the chorismate synthase family. As to quaternary structure, homotetramer. FMNH2 serves as cofactor.

It carries out the reaction 5-O-(1-carboxyvinyl)-3-phosphoshikimate = chorismate + phosphate. It functions in the pathway metabolic intermediate biosynthesis; chorismate biosynthesis; chorismate from D-erythrose 4-phosphate and phosphoenolpyruvate: step 7/7. In terms of biological role, catalyzes the anti-1,4-elimination of the C-3 phosphate and the C-6 proR hydrogen from 5-enolpyruvylshikimate-3-phosphate (EPSP) to yield chorismate, which is the branch point compound that serves as the starting substrate for the three terminal pathways of aromatic amino acid biosynthesis. This reaction introduces a second double bond into the aromatic ring system. In Mycolicibacterium paratuberculosis (strain ATCC BAA-968 / K-10) (Mycobacterium paratuberculosis), this protein is Chorismate synthase.